Here is a 554-residue protein sequence, read N- to C-terminus: MDSVTNFFWNDTYNAGTPTRSTLKGKKVQNGIDGKSQAKKESISSGSRTSDPTRGSLPSSSGQPTSGGGFPSTSNIQKMMADTLVEKIIKMALPPSSKTAVDTIHHRMVAGKERPKLSVQITSRNFIQMNSRLGVPFMIMDELIKILNWTNPAYTVSIMFLYTLIILKPFQMLSSLPIFYLLFCVMVPQYLYIHKPNPTSYLDNNQTPAQGPPLRRPEVPKPVPELSQEFVLNLTDLQNHMLLYVKFYDFTLLILQKFAFFTNEAISSFYFIVLLIIATLNFLYMDKFIKLIPMRPVLILLGWGFFIASHPSNREYLLTKLNSEETRLKTLTISTNLESKILQHLKLIEAREHRLVMIFEIQKYLPEYKEWRPVGFSDDDYSLFSSLRIYQRRIEENSVKSLEEIEPPKDWEWEANSHWVLDLDPKEWVEDEFIQYVEIDSETKWVYDLNLDGQRGSYRRRMWTNSCVRKKLDSGISSNLGEEEVVNPLREETYRQGVHGVTKGSMSGGLTHSSDDDRADEESINGTIPNLNNIDADASYPSIEELTDTLNSTI.

Topologically, residues 1–145 (MDSVTNFFWN…PFMIMDELIK (145 aa)) are cytoplasmic. 2 stretches are compositionally biased toward polar residues: residues 11–22 (DTYNAGTPTRST) and 43–53 (ISSGSRTSDPT). The tract at residues 11–73 (DTYNAGTPTR…PTSGGGFPST (63 aa)) is disordered. The span at 55-64 (GSLPSSSGQP) shows a compositional bias: low complexity. The helical transmembrane segment at 146-166 (ILNWTNPAYTVSIMFLYTLII) threads the bilayer. Topologically, residues 167–172 (LKPFQM) are peroxisomal. The chain crosses the membrane as a helical span at residues 173–193 (LSSLPIFYLLFCVMVPQYLYI). Over 194–264 (HKPNPTSYLD…LQKFAFFTNE (71 aa)) the chain is Cytoplasmic. The helical transmembrane segment at 265–285 (AISSFYFIVLLIIATLNFLYM) threads the bilayer. The Peroxisomal portion of the chain corresponds to 286-287 (DK). Residues 288–308 (FIKLIPMRPVLILLGWGFFIA) form a helical membrane-spanning segment. Over 309–554 (SHPSNREYLL…ELTDTLNSTI (246 aa)) the chain is Cytoplasmic. The tract at residues 500 to 532 (GVTKGSMSGGLTHSSDDDRADEESINGTIPNLN) is disordered.

Belongs to the PEX28-32 family. PEX29 subfamily.

The protein resides in the peroxisome membrane. Involved in the regulation of peroxisome number, size and distribution. The sequence is that of Peroxisomal membrane protein PEX29 (PEX29) from Saccharomyces cerevisiae (strain ATCC 204508 / S288c) (Baker's yeast).